Here is a 322-residue protein sequence, read N- to C-terminus: Cytochrome c biogenesis protein CcsA (322 aa).

7 helical membrane passes run 9 to 29 (ILTH…LITL), 43 to 63 (GMIA…IYSG), 70 to 90 (LYES…VPKI), 142 to 162 (MLLS…LLVI), 226 to 246 (VISL…VWAN), 259 to 274 (ETWA…IYSH), and 287 to 307 (AIVA…VNLL).

This sequence belongs to the CcmF/CycK/Ccl1/NrfE/CcsA family. In terms of assembly, may interact with Ccs1.

The protein resides in the plastid. Its subcellular location is the chloroplast thylakoid membrane. Its function is as follows. Required during biogenesis of c-type cytochromes (cytochrome c6 and cytochrome f) at the step of heme attachment. The sequence is that of Cytochrome c biogenesis protein CcsA from Chloranthus spicatus (Chulantree).